Here is a 609-residue protein sequence, read N- to C-terminus: MSQESSYGKWTISSSDESEDEKPKPDKPSASSHPQAGQGVSKELIYTCSEARKVAHKRQISPVKFNDADSVLPHKKQKSDSPEGLGWCLSSSDDDQQPDVTQQEQPKRVLPQEKKHVSSPDVTTAQKVVDRSPPASLRPQRADDEYETSGEGQDIWDMLDKGNPFQFYLTRVSGIKAKYNSKALHIKDILSPLFGTLVSSAQFNYCFDVDWLIKQYPPEFRKNPILLVHGDKREAKADLHAQAKPYANISLCQAKLDIAFGTHHTKMMLLLYEEGLRVVIHTSNLIREDWHQKTQGIWLSPLYPRIDQGSHTAGESSTRFKADLTSYLTAYNAPPLQEWIDIIQEHDLSETNVYLIGSTPGRFQGSHRDNWGHFRLRKLLQAHAPSTPKGECWPIVGQFSSIGSLGPDESKWLCSEFKDSLLALREEGRPPGKSAVPLHLIYPSVENVRTSLEGYPAGGSLPYSIQTAEKQRWLHSYFHKWSAETSGRSNAMPHIKTYMRPSPDFSKLAWFLVTSANLSKAAWGALEKNGTQLMIRSYELGVLFLPSAFGLDTFKVKQKFFSSSCEPTASFPVPYDLPPELYRSKDRPWIWNIPYVKAPDTHGNMWVPS.

Positions 1 to 12 (MSQESSYGKWTI) are enriched in polar residues. The disordered stretch occupies residues 1-155 (MSQESSYGKW…YETSGEGQDI (155 aa)). Ser61 carries the phosphoserine modification. The segment covering 105–118 (QPKRVLPQEKKHVS) has biased composition (basic and acidic residues). Phosphoserine is present on residues Ser119 and Ser132. Thr148 is subject to Phosphothreonine. A Phosphoserine modification is found at Ser149. His264 (nucleophile) is an active-site residue. Lys266 lines the substrate pocket. The tract at residues 401–404 (SIGS) is interaction with DNA. The Proton donor/acceptor role is filled by His494. Substrate is bound at residue Lys496.

It belongs to the tyrosyl-DNA phosphodiesterase family. In terms of assembly, monomer. As to expression, ubiquitous.

The protein localises to the nucleus. It is found in the cytoplasm. In terms of biological role, DNA repair enzyme that can remove a variety of covalent adducts from DNA through hydrolysis of a 3'-phosphodiester bond, giving rise to DNA with a free 3' phosphate. Catalyzes the hydrolysis of dead-end complexes between DNA and the topoisomerase I active site tyrosine residue. Hydrolyzes 3'-phosphoglycolates on protruding 3' ends on DNA double-strand breaks due to DNA damage by radiation and free radicals. Acts on blunt-ended double-strand DNA breaks and on single-stranded DNA. Has low 3'exonuclease activity and can remove a single nucleoside from the 3'end of DNA and RNA molecules with 3'hydroxyl groups. Has no exonuclease activity towards DNA or RNA with a 3'phosphate. The sequence is that of Tyrosyl-DNA phosphodiesterase 1 (Tdp1) from Mus musculus (Mouse).